A 295-amino-acid chain; its full sequence is Acetylglutamate kinase (295 aa).

Residues 66 to 67 (GG), R88, and N193 each bind substrate.

It belongs to the acetylglutamate kinase family. ArgB subfamily.

The protein resides in the cytoplasm. It catalyses the reaction N-acetyl-L-glutamate + ATP = N-acetyl-L-glutamyl 5-phosphate + ADP. Its pathway is amino-acid biosynthesis; L-arginine biosynthesis; N(2)-acetyl-L-ornithine from L-glutamate: step 2/4. Its function is as follows. Catalyzes the ATP-dependent phosphorylation of N-acetyl-L-glutamate. The polypeptide is Acetylglutamate kinase (Allorhizobium ampelinum (strain ATCC BAA-846 / DSM 112012 / S4) (Agrobacterium vitis (strain S4))).